A 106-amino-acid polypeptide reads, in one-letter code: Transcription initiation factor IIA subunit 2 (106 aa).

Belongs to the TFIIA subunit 2 family. As to quaternary structure, TFIIA is a heterodimer of the large unprocessed subunit 1 and a small subunit gamma. It was originally believed to be a heterotrimer of an alpha (p30), a beta (p20) and a gamma (p14) subunit. Forms a complex with Moonshiner/CG12721 and Trf2. Ubiquitous.

It is found in the nucleus. Functionally, TFIIA is a component of the transcription machinery of RNA polymerase II and plays an important role in transcriptional activation. TFIIA in a complex with TBP mediates transcriptional activity. Part of a rhi-dependent transcription machinery that enables the generation of piRNA precursors from heterochromatin while maintaining the suppression of transposon-encoded promoters and enhancers. Forms a complex with Moonshiner/CG12721 and Trf2 which recruit transcriptional machinery to heterochromatin to initiate the bidirectional transcription of piRNA clusters, by interacting with the RDC (rhi, del and cuff) complex that binds to repressive H3K9me3 marks in the chromatin. This mechanism allows transcription to occur in piRNA clusters despite the lack of proper promoter elements and in the presence of the repressive H3K9me3 mark. In Drosophila melanogaster (Fruit fly), this protein is Transcription initiation factor IIA subunit 2 (TfIIA-S).